We begin with the raw amino-acid sequence, 324 residues long: MGPWGEPELLVWRPEAAASEAPVPMGLEVKLGALVLLLVLTLICSLVPVCVLRRPGANPEASASRQKALSLVSCFAGGVFLATCLLDLLPDYLGAIDEALAALHVTLQFPLQEFILAMGFFLVLVMEQITLAYKEQSGPPPREETRALLGTVNGGPQHWHDGLGVPQAGGASSAPSALRACVLVFSLALHSVFEGLAVGLQRDQARAMELCLALLLHKGILAVSLSLRLLQSHLRAQVVAGCGILFSCMTPLGIGLGTALAESAGPLHQLAQSVLEGMAAGTFLYITFLEILPQELATSEQRILKVILLLAGFALLTGLLFIQI.

Residues 1-30 are Extracellular-facing; that stretch reads MGPWGEPELLVWRPEAAASEAPVPMGLEVK. Residues 31–51 traverse the membrane as a helical segment; that stretch reads LGALVLLLVLTLICSLVPVCV. Residues 52–68 lie on the Cytoplasmic side of the membrane; it reads LRRPGANPEASASRQKA. The helical transmembrane segment at 69-89 threads the bilayer; the sequence is LSLVSCFAGGVFLATCLLDLL. Topologically, residues 90–104 are extracellular; that stretch reads PDYLGAIDEALAALH. Residues 105 to 125 traverse the membrane as a helical segment; the sequence is VTLQFPLQEFILAMGFFLVLV. Residues 126 to 179 lie on the Cytoplasmic side of the membrane; sequence MEQITLAYKEQSGPPPREETRALLGTVNGGPQHWHDGLGVPQAGGASSAPSALR. Residues 180-200 traverse the membrane as a helical segment; sequence ACVLVFSLALHSVFEGLAVGL. Residues 201-206 are Extracellular-facing; it reads QRDQAR. Residues 207–227 form a helical membrane-spanning segment; sequence AMELCLALLLHKGILAVSLSL. The Cytoplasmic segment spans residues 228–237; it reads RLLQSHLRAQ. The chain crosses the membrane as a helical span at residues 238–258; it reads VVAGCGILFSCMTPLGIGLGT. The Extracellular portion of the chain corresponds to 259 to 272; sequence ALAESAGPLHQLAQ. The chain crosses the membrane as a helical span at residues 273–293; it reads SVLEGMAAGTFLYITFLEILP. Topologically, residues 294–303 are cytoplasmic; that stretch reads QELATSEQRI. Residues 304 to 324 form a helical membrane-spanning segment; the sequence is LKVILLLAGFALLTGLLFIQI.

This sequence belongs to the ZIP transporter (TC 2.A.5) family.

It localises to the cell membrane. Its subcellular location is the endoplasmic reticulum membrane. It carries out the reaction Zn(2+)(in) = Zn(2+)(out). Its function is as follows. Transporter for the divalent cation Zn(2+). Mediates the influx of Zn(2+) into cells from extracellular space. The polypeptide is Zinc transporter ZIP1 (SLC39A1) (Bos taurus (Bovine)).